An 82-amino-acid chain; its full sequence is ATP synthase subunit c (82 aa).

The next 2 membrane-spanning stretches (helical) occupy residues 7–27 (AASV…PGIG) and 57–77 (FAFM…LLFA).

The protein belongs to the ATPase C chain family. As to quaternary structure, F-type ATPases have 2 components, F(1) - the catalytic core - and F(0) - the membrane proton channel. F(1) has five subunits: alpha(3), beta(3), gamma(1), delta(1), epsilon(1). F(0) has four main subunits: a(1), b(1), b'(1) and c(10-14). The alpha and beta chains form an alternating ring which encloses part of the gamma chain. F(1) is attached to F(0) by a central stalk formed by the gamma and epsilon chains, while a peripheral stalk is formed by the delta, b and b' chains.

It is found in the cellular thylakoid membrane. Its function is as follows. F(1)F(0) ATP synthase produces ATP from ADP in the presence of a proton or sodium gradient. F-type ATPases consist of two structural domains, F(1) containing the extramembraneous catalytic core and F(0) containing the membrane proton channel, linked together by a central stalk and a peripheral stalk. During catalysis, ATP synthesis in the catalytic domain of F(1) is coupled via a rotary mechanism of the central stalk subunits to proton translocation. Key component of the F(0) channel; it plays a direct role in translocation across the membrane. A homomeric c-ring of between 10-14 subunits forms the central stalk rotor element with the F(1) delta and epsilon subunits. The chain is ATP synthase subunit c from Prochlorococcus marinus (strain NATL1A).